The sequence spans 410 residues: MARAAGERGRAARCGRWRRGALLAFAAWTAGWVLAAALLLRAHPSVLSERCTDEKSRRILAALCQDYRRGWLTGALCEDLCVGGELLYQRCLYYERGKKVLQAQWRGRTVVLKSKREAFSSFPPLTLLEEEAGAGAPGIPEAELLLMVAGEVKNTLGLELPNNSIAPLWPARQGPGWRQQLASAWSLLQQEEYVYFSLLPDLSRHILPVLGSCGHFYAVEYLAAGSPHHKALFPLDDAGQAQAISHIALSFLDMVSHFDSDFSHRLHLCDVKPENFAIKRDFTVVAIDVDMAFFEPKMREILEQNCTGDEDCNFFDCFSKCDLRVHKCGAQRVNSNLQVICDKIFRHWFSSTHRSPAVSLQLRLQLQQAVQECAQHGGSSGNSWTASSSVFWKLRWLLQATLKELQEAEK.

Over 1-19 (MARAAGERGRAARCGRWRR) the chain is Cytoplasmic. Residues 18–19 (RR) carry the May mediate ER retention motif. Residues 20–40 (GALLAFAAWTAGWVLAAALLL) traverse the membrane as a helical segment. Residues 41 to 410 (RAHPSVLSER…TLKELQEAEK (370 aa)) are Lumenal-facing.

Belongs to the DIPK family. Among the many cysteines in the lumenal domain, most are probably involved in disulfide bonds. Mainly expressed in the brain and eye, some expression in kidney and skeletal muscle.

The protein localises to the endoplasmic reticulum membrane. The chain is Divergent protein kinase domain 1C (Dipk1c) from Mus musculus (Mouse).